A 258-amino-acid chain; its full sequence is Dihydroorotate dehydrogenase B (NAD(+)), electron transfer subunit (258 aa).

The FAD-binding FR-type domain occupies 1-101; sequence MKKAYLTVVS…LGPLGNGYDP (101 aa). FAD-binding positions include 52 to 55, 69 to 71, and 76 to 77; these read RPIS, IYR, and GT. 4 residues coordinate [2Fe-2S] cluster: Cys220, Cys225, Cys228, and Cys243.

The protein belongs to the PyrK family. Heterotetramer of 2 PyrK and 2 PyrD type B subunits. The cofactor is [2Fe-2S] cluster. Requires FAD as cofactor.

It participates in pyrimidine metabolism; UMP biosynthesis via de novo pathway; orotate from (S)-dihydroorotate (NAD(+) route): step 1/1. Functionally, responsible for channeling the electrons from the oxidation of dihydroorotate from the FMN redox center in the PyrD type B subunit to the ultimate electron acceptor NAD(+). This Bacillus pumilus (strain SAFR-032) protein is Dihydroorotate dehydrogenase B (NAD(+)), electron transfer subunit.